The sequence spans 94 residues: uncharacterized protein (94 aa).

This sequence belongs to the phage portal family. HK97 subfamily.

This is an uncharacterized protein from Rickettsia conorii (strain ATCC VR-613 / Malish 7).